The chain runs to 158 residues: Probable deoxyuridine 5'-triphosphate nucleotidohydrolase (158 aa).

It belongs to the dUTPase family. Requires Mg(2+) as cofactor.

It carries out the reaction dUTP + H2O = dUMP + diphosphate + H(+). It functions in the pathway pyrimidine metabolism; dUMP biosynthesis; dUMP from dCTP (dUTP route): step 1/2. Functionally, this enzyme is involved in nucleotide metabolism: it produces dUMP, the immediate precursor of thymidine nucleotides and it decreases the intracellular concentration of dUTP so that uracil cannot be incorporated into DNA. It does probably not deaminate dCTP. The sequence is that of Probable deoxyuridine 5'-triphosphate nucleotidohydrolase from Sulfolobus islandicus rod-shaped virus 1 (SIRV-1).